Consider the following 1985-residue polypeptide: MENSHPHHHHQQPPPQPGPSGERRNHHWRSYKLMIDPALKKGHHKLYRYDGQHFSLAMSSNRPVEIVEDPRVVGIWTKNKELELSVPKFKIDEFYVGPVPPKQVTFAKLNDNVRENFLRDMCKKYGEVEEVEILYNPKTKKHLGIAKVVFATVRGAKEAVQHLHSTSVMGNIIHVELDTKGETRMRFYELLVTGRYTPQTLPVGELDAISPIVSETLQLSDALKRLKDGSLSAGCGSGSSSVTPNSGGTPFSQDTAYSSCRLDTPNSYGQGTPITPRLGTPFSQDSSYSSRQPTPSYLFSQDPTATFKARRHESKFTDAYNRRHEHHYVHNSAVAGATAPFRGSSDLSFGTVGSSGTPFKAQSQDATTFAHTPPPAQTATASGFKSAFSPYQTPAPPFPPPPEEPTATAAFGSRDSGEFRRAPAPPPLPPAEPPAKEKPGTPPGPPPPDSNSMELGGRPTFGWSPEPCDSPGTPTLESSPAGPEKPHDSLDSRIEMLLKEQRTKLPFLREQDSDTEIQMEGSPISSSSSQLSPLSHFGTNSQPGFRGPSPPSSRPSSTGLEDISPTPLPDSDEDEDLGLGLGPRPPPEPGPPDPMGLLGQTAEVDLDLAGDRTPTSERMDEGQQSSGEDMEISDDEMPSAPITSADCPKPMVVTPGAGAVAAPNVLAPNLPLPPPPGFPPLPPPPPPPPPQPGFPMPPPLPPPPPPPPPAHPAVTVPPPPLPAPPGVPPPPILPPLPPFPPGLFPVMQVDMSHVLGGQWGGMPMSFQMQTQMLSRLMTGQGACPYPPFMAAAAAAASAGLQFVNLPPYRSPFSLSNSGPGRGQHWPPLPKFDPSVPPPGYIPRQEDPHKATVDGVLLVVLKELKAIMKRDLNRKMVEVVAFRAFDEWWDKKERMAKASLTPVKSGEHKDEDRPKPKDRIASCLLESWGKGEGLGYEGLGLGIGLRGAIRLPSFKVKRKEPPDTASSGDQKRLRPSTSVDEEDEESERERDRDIADAPCELTKRDPKSVGVRRRPGRPLELDSGGEEDEKESLSASSSSSASSSSGSSTTSPSSSASDKEEEDRESTEEEEEEEEEEAEEEEEEGPRSRISSPSSSSSSDKDDEDDNEADSDGQIDSDIDDQGAPLSEASEKDNGDSEEEETESITTSKAPAESSSSSSESSGSSEFESSSESESSSSSSEDEEEMTVPGVEEEEEEEEEEEKETAMAAATVVAMAEESMPPAGGQDFEQDRAEVPLGPRGPMRESLGTEEEVDIEAEDEVPEMQAPELEEPPLPMGARKLEGSPEPPEEPGPNTQGDMLLSPELPARETEEAQLPSPPEHGPESDLDMEPEPPPMLSLPLQPPLPPPRLLRPPSPPPEPETPEPPKPPVPLEPPPEDHPPRTPGLCGSLAKSQSTETVPATPGGEPPLSGSSSGLSLSSPQVPGSPFSYPSPSPGLSSGGLPRTPGRDFSFTPTFPEPSGPLLLPVCPLPTGRRDERTGPLASPVLLETGLPLPLPLPLPLPLALPVPVLRAQPRPPPQLPPLLPATLAPCPTPIKRKPGRPRRSPPSMLSLDGPLVRPPPGPALGRDLLLLPGQPPAPIFPSAHDPRAVTLDFRNTGIPAPPPPLPPQPPPPPPPPPVESTKLPFKELDNQWPSEAIPPGPRRDEVTEEYVDLAKVRGPWRRPPKKRHEDLVAPSASPEPSPPQPLFRPRSEFEEMTILYDIWNGGIDEEDIRFLCVTYERLLQQDNGMDWLNDTLWVYHPSTSLSSAKKKKREDGIREHVTGCARSEGFYTIDKKDKLRYLNSSRASTDEPPMDTQGMSIPAQPHASTRAGSERRSEQRRLLSSFTGSCDSDLLKFNQLKFRKKKLKFCKSHIHDWGLFAMEPIAADEMVIEYVGQNIRQVIADMREKRYEDEGIGSSYMFRVDHDTIIDATKCGNFARFINHSCNPNCYAKVITVESQKKIVIYSKQHINVNEEITYDYKFPIEDVKIPCLCGSENCRGTLN.

Over residues 1-11 (MENSHPHHHHQ) the composition is skewed to basic residues. The segment at 1 to 25 (MENSHPHHHHQQPPPQPGPSGERRN) is disordered. Residues 67–97 (VEDPRVVGIWTKNKELELSVPKFKIDEFYVG) form an interaction with WDR82 region. Residues 92 to 180 (DEFYVGPVPP…NIIHVELDTK (89 aa)) enclose the RRM domain. Disordered regions lie at residues 234–304 (GCGS…QDPT), 353–710 (GSSG…PPPA), 955–1480 (VKRK…RTGP), 1519–1624 (QLPP…STKL), and 1658–1687 (RGPW…PQPL). Composition is skewed to polar residues over residues 242–258 (VTPN…TAYS), 264–273 (TPNSYGQGTP), 281–304 (PFSQ…QDPT), and 353–365 (GSSG…QSQD). Low complexity predominate over residues 366-381 (ATTFAHTPPPAQTATA). Composition is skewed to pro residues over residues 393 to 404 (TPAPPFPPPPEE), 423 to 433 (PAPPPLPPAEP), and 440 to 449 (GTPPGPPPPD). Positions 484 to 512 (EKPHDSLDSRIEMLLKEQRTKLPFLREQD) are enriched in basic and acidic residues. Residues 522-535 (SPISSSSSQLSPLS) show a composition bias toward low complexity. Over residues 583–594 (PRPPPEPGPPDP) the composition is skewed to pro residues. The span at 628-637 (EDMEISDDEM) shows a compositional bias: acidic residues. Residues 650–669 (PMVVTPGAGAVAAPNVLAPN) show a composition bias toward low complexity. Residues 670–710 (LPLPPPPGFPPLPPPPPPPPPQPGFPMPPPLPPPPPPPPPA) are compositionally biased toward pro residues. Phosphoserine is present on residues S977 and S985. Residues 986 to 1006 (ERERDRDIADAPCELTKRDPK) show a composition bias toward basic and acidic residues. S1022 carries the phosphoserine modification. Residues 1032–1055 (LSASSSSSASSSSGSSTTSPSSSA) show a composition bias toward low complexity. The span at 1058–1083 (KEEEDRESTEEEEEEEEEEAEEEEEE) shows a compositional bias: acidic residues. The segment covering 1087-1097 (SRISSPSSSSS) has biased composition (low complexity). The segment covering 1100 to 1120 (KDDEDDNEADSDGQIDSDIDD) has biased composition (acidic residues). Residues 1143–1178 (SITTSKAPAESSSSSSESSGSSEFESSSESESSSSS) show a composition bias toward low complexity. The span at 1179-1202 (SEDEEEMTVPGVEEEEEEEEEEEK) shows a compositional bias: acidic residues. The segment covering 1205-1217 (AMAAATVVAMAEE) has biased composition (low complexity). Residues 1247-1261 (GTEEEVDIEAEDEVP) are compositionally biased toward acidic residues. A phosphoserine mark is found at S1283, S1301, and S1354. A compositionally biased stretch (pro residues) spans 1331–1373 (EPPPMLSLPLQPPLPPPRLLRPPSPPPEPETPEPPKPPVPLEP). The span at 1402-1442 (PGGEPPLSGSSSGLSLSSPQVPGSPFSYPSPSPGLSSGGLP) shows a compositional bias: low complexity. A compositionally biased stretch (basic residues) spans 1535–1544 (IKRKPGRPRR). 2 stretches are compositionally biased toward pro residues: residues 1600-1619 (PAPP…PPPV) and 1678-1687 (SPEPSPPQPL). Residues S1678 and S1682 each carry the phosphoserine modification. The short motif at 1764–1769 (GCARSE) is the WDR5 interaction motif (WIN) element. A disordered region spans residues 1786 to 1819 (SRASTDEPPMDTQGMSIPAQPHASTRAGSERRSE). Positions 1817-1822 (RSEQRR) match the RxxxRR motif motif. Residues 1846–1963 (KKLKFCKSHI…VNEEITYDYK (118 aa)) form the SET domain. Y1962 is an S-adenosyl-L-methionine binding site. The Post-SET domain maps to 1969 to 1985 (VKIPCLCGSENCRGTLN).

This sequence belongs to the class V-like SAM-binding methyltransferase superfamily. Component of the SET1B/COMPASS complex composed of the catalytic subunit SETD1B, WDR5, WDR82, RBBP5, ASH2L/ASH2, CXXC1/CFP1, HCFC1, DPY30 homotrimer and BOD1. Forms a core complex with the evolutionary conserved subcomplex WRAD composed of WDR5, RBBP5, ASH2L/ASH2 and DPY30 subunits; WRAD differentially stimulates the methyltransferase activity. Interacts with HCFC1 and ASH2L/ASH2. Interacts (via the RRM domain) with WDR82. Interacts (via the RRM domain) with hyperphosphorylated C-terminal domain (CTD) of RNA polymerase II large subunit (POLR2A) only in the presence of WDR82. Binds specifically to CTD heptad repeats phosphorylated on 'Ser-5' of each heptad. Interacts with RBM15. Interacts (via WIN motif) with WDR5. In terms of tissue distribution, widely expressed.

The protein localises to the nucleus. Its subcellular location is the nucleus speckle. The protein resides in the chromosome. It localises to the cytoplasm. It catalyses the reaction L-lysyl(4)-[histone H3] + S-adenosyl-L-methionine = N(6)-methyl-L-lysyl(4)-[histone H3] + S-adenosyl-L-homocysteine + H(+). The enzyme catalyses N(6)-methyl-L-lysyl(4)-[histone H3] + S-adenosyl-L-methionine = N(6),N(6)-dimethyl-L-lysyl(4)-[histone H3] + S-adenosyl-L-homocysteine + H(+). It carries out the reaction N(6),N(6)-dimethyl-L-lysyl(4)-[histone H3] + S-adenosyl-L-methionine = N(6),N(6),N(6)-trimethyl-L-lysyl(4)-[histone H3] + S-adenosyl-L-homocysteine + H(+). In terms of biological role, histone methyltransferase that catalyzes methyl group transfer from S-adenosyl-L-methionine to the epsilon-amino group of 'Lys-4' of histone H3 (H3K4) via a non-processive mechanism. Part of chromatin remodeling machinery, forms H3K4me1, H3K4me2 and H3K4me3 methylation marks at active chromatin sites where transcription and DNA repair take place. Plays an essential role in regulating the transcriptional programming of multipotent hematopoietic progenitor cells and lymphoid lineage specification during hematopoiesis. The sequence is that of Histone-lysine N-methyltransferase SETD1B (Setd1b) from Mus musculus (Mouse).